We begin with the raw amino-acid sequence, 453 residues long: tRNA modification GTPase MnmE (453 aa).

Residues R22, E79, and K119 each contribute to the (6S)-5-formyl-5,6,7,8-tetrahydrofolate site. One can recognise a TrmE-type G domain in the interval 215–376 (GMKVVIAGRP…LQQHLKSLMG (162 aa)). N225 contacts K(+). Residues 225–230 (NAGKSS), 244–250 (TEIAGTT), 269–272 (DTAG), and 334–337 (NKAD) contribute to the GTP site. Position 229 (S229) interacts with Mg(2+). T244, I246, and T249 together coordinate K(+). Residue T250 participates in Mg(2+) binding. K453 is a (6S)-5-formyl-5,6,7,8-tetrahydrofolate binding site.

The protein belongs to the TRAFAC class TrmE-Era-EngA-EngB-Septin-like GTPase superfamily. TrmE GTPase family. As to quaternary structure, homodimer. Heterotetramer of two MnmE and two MnmG subunits. K(+) is required as a cofactor.

The protein resides in the cytoplasm. In terms of biological role, exhibits a very high intrinsic GTPase hydrolysis rate. Involved in the addition of a carboxymethylaminomethyl (cmnm) group at the wobble position (U34) of certain tRNAs, forming tRNA-cmnm(5)s(2)U34. In Shewanella woodyi (strain ATCC 51908 / MS32), this protein is tRNA modification GTPase MnmE.